We begin with the raw amino-acid sequence, 185 residues long: Keratin-associated protein 4-8 (185 aa).

25 tandem repeats follow at residues 14–18 (GCGQD), 19–23 (LCQET), 24–28 (CCCPS), 39–43 (CYRPS), 44–48 (YSVSC), 49–53 (CCRPQ), 54–58 (CCQSV), 59–63 (CCQPT), 64–68 (CCRPS), 69–73 (CCVSS), 74–78 (CCKPQ), 79–83 (CCQSV), 84–88 (CCQPT), 89–93 (CCHPS), 94–98 (CCISS), 99–103 (CCRPS), 104–108 (CCVSS), 109–113 (CCKPQ), 114–118 (CCQSV), 119–123 (CCQPN), 124–128 (CCRPS), 134–138 (CCRPS), 139–143 (CCESS), 144–148 (CCRPC), and 149–164 (CCLR…HTTC). Residues 14 to 164 (GCGQDLCQET…CGRVSCHTTC (151 aa)) are 25 X 5 AA repeats of C-C-[IKRQVHEC]-[SPRT]-[STCVQPR].

The protein belongs to the KRTAP type 4 family. Interacts with hair keratins. As to expression, expressed in the hair follicles.

Functionally, in the hair cortex, hair keratin intermediate filaments are embedded in an interfilamentous matrix, consisting of hair keratin-associated proteins (KRTAP), which are essential for the formation of a rigid and resistant hair shaft through their extensive disulfide bond cross-linking with abundant cysteine residues of hair keratins. The matrix proteins include the high-sulfur and high-glycine-tyrosine keratins. This Homo sapiens (Human) protein is Keratin-associated protein 4-8 (KRTAP4-8).